A 412-amino-acid chain; its full sequence is L-cysteine:1D-myo-inositol 2-amino-2-deoxy-alpha-D-glucopyranoside ligase (412 aa).

Cys44 contributes to the Zn(2+) binding site. Residues Cys44–Thr47, Thr59, and Asn82–Thr84 each bind L-cysteinyl-5'-AMP. The 'HIGH' region motif lies at Ile46–His56. A 'ERGGDP' region motif is present at residues Gln187 to Pro192. Trp227 provides a ligand contact to L-cysteinyl-5'-AMP. Residue Cys231 coordinates Zn(2+). Residue Gly249–Asp251 coordinates L-cysteinyl-5'-AMP. Residue His256 coordinates Zn(2+). Ile283 contacts L-cysteinyl-5'-AMP. Residues Lys289–Ser293 carry the 'KMSKS' region motif.

The protein belongs to the class-I aminoacyl-tRNA synthetase family. MshC subfamily. In terms of assembly, monomer. Zn(2+) serves as cofactor.

It catalyses the reaction 1D-myo-inositol 2-amino-2-deoxy-alpha-D-glucopyranoside + L-cysteine + ATP = 1D-myo-inositol 2-(L-cysteinylamino)-2-deoxy-alpha-D-glucopyranoside + AMP + diphosphate + H(+). In terms of biological role, catalyzes the ATP-dependent condensation of GlcN-Ins and L-cysteine to form L-Cys-GlcN-Ins. This Mycobacterium leprae (strain TN) protein is L-cysteine:1D-myo-inositol 2-amino-2-deoxy-alpha-D-glucopyranoside ligase (mshC).